The chain runs to 355 residues: Ribosomal RNA large subunit methyltransferase M (355 aa).

S-adenosyl-L-methionine is bound by residues Ser191, Ala224 to Gly227, Asp243, Asp263, and Asp279. Lys308 serves as the catalytic Proton acceptor.

The protein belongs to the class I-like SAM-binding methyltransferase superfamily. RNA methyltransferase RlmE family. RlmM subfamily. As to quaternary structure, monomer.

Its subcellular location is the cytoplasm. The enzyme catalyses cytidine(2498) in 23S rRNA + S-adenosyl-L-methionine = 2'-O-methylcytidine(2498) in 23S rRNA + S-adenosyl-L-homocysteine + H(+). Functionally, catalyzes the 2'-O-methylation at nucleotide C2498 in 23S rRNA. This Stenotrophomonas maltophilia (strain K279a) protein is Ribosomal RNA large subunit methyltransferase M.